A 945-amino-acid polypeptide reads, in one-letter code: Netrin receptor UNC5B (945 aa).

The N-terminal stretch at 1–26 (MGARSGARGALLLALLLCWDPRLSQA) is a signal peptide. Over 27-377 (GTDSGSEVLP…LEASGDAALY (351 aa)) the chain is Extracellular. The Ig-like domain maps to 48–145 (PYFLQEPQDA…AGTTKSRRAY (98 aa)). 9 disulfide bridges follow: cysteine 69–cysteine 130, cysteine 81–cysteine 128, cysteine 174–cysteine 225, cysteine 258–cysteine 295, cysteine 262–cysteine 299, cysteine 273–cysteine 285, cysteine 314–cysteine 348, cysteine 318–cysteine 353, and cysteine 326–cysteine 338. Residues 147–242 (RIAYLRKNFD…KRRSTTATVI (96 aa)) form the Ig-like C2-type domain. N-linked (GlcNAc...) asparagine glycosylation is present at asparagine 222. 2 TSP type-1 domains span residues 246–300 (NGGW…TICP) and 302–354 (DGAW…GLCM). An N-linked (GlcNAc...) asparagine glycan is attached at asparagine 347. The helical transmembrane segment at 378–398 (AGLVVAIFVVVAILMAVGVVV) threads the bilayer. Residues 399–945 (YRRNCRDFDT…LVAVATDGDC (547 aa)) lie on the Cytoplasmic side of the membrane. Cysteine 403 carries the S-palmitoyl cysteine lipid modification. Positions 543 to 686 (SSVSGTFGCL…LGTYVFTGES (144 aa)) constitute a ZU5 domain. Phosphotyrosine is present on tyrosine 581. Residues 689–838 (RSAVKRLQLA…AETPAGSLDT (150 aa)) are UPA domain. The interval 707–725 (SLEYSLRVYCLEDTPVALK) is interaction with DCC. Positions 865–943 (KICNSLDAPN…EMLVAVATDG (79 aa)) constitute a Death domain.

It belongs to the unc-5 family. As to quaternary structure, interacts with the cytoplasmic part of DCC. Interacts with GNAI2 via its cytoplasmic part. Interacts (via death domain) with DAPK1 (via death domain). Interacts (via extracellular domain) with FLRT3 (via extracellular domain); the interaction is direct. Interacts (via extracellular domain) with FLRT2 and FLRT3 (via extracellular domain), but has higher affinity for FLRT3. Identified in a complex with FLRT3 and ADGRL3; does not interact with ADGRL3 by itself. In terms of processing, phosphorylated on cytoplasmic tyrosine residues. Proteolytically cleaved by caspases during apoptosis. The cleavage does not take place when the receptor is associated with netrin ligand. Its cleavage by caspases is required to induce apoptosis. Post-translationally, palmitoylation is required for pro-apoptotic activity, but not for location at lipid rafts. As to expression, highly expressed in brain. Also expressed at lower level in developing lung, cartilage, kidney and hematopoietic and immune tissues.

The protein resides in the cell membrane. It is found in the membrane raft. Receptor for netrin required for axon guidance. Mediates axon repulsion of neuronal growth cones in the developing nervous system upon ligand binding. Axon repulsion in growth cones may be caused by its association with DCC that may trigger signaling for repulsion. Functions as a netrin receptor that negatively regulates vascular branching during angiogenesis. Mediates retraction of tip cell filopodia on endothelial growth cones in response to netrin. It also acts as a dependence receptor required for apoptosis induction when not associated with netrin ligand. Mediates apoptosis by activating DAPK1. In the absence of NTN1, activates DAPK1 by reducing its autoinhibitory phosphorylation at Ser-308 thereby increasing its catalytic activity. The sequence is that of Netrin receptor UNC5B (UNC5B) from Homo sapiens (Human).